Reading from the N-terminus, the 1199-residue chain is DNA-directed RNA polymerase subunit beta' (1199 aa).

Residues Cys60, Cys62, Cys75, and Cys78 each coordinate Zn(2+). Mg(2+) contacts are provided by Asp449, Asp451, and Asp453. 4 residues coordinate Zn(2+): Cys818, Cys892, Cys899, and Cys902.

It belongs to the RNA polymerase beta' chain family. In terms of assembly, the RNAP catalytic core consists of 2 alpha, 1 beta, 1 beta' and 1 omega subunit. When a sigma factor is associated with the core the holoenzyme is formed, which can initiate transcription. It depends on Mg(2+) as a cofactor. Requires Zn(2+) as cofactor.

The catalysed reaction is RNA(n) + a ribonucleoside 5'-triphosphate = RNA(n+1) + diphosphate. Its function is as follows. DNA-dependent RNA polymerase catalyzes the transcription of DNA into RNA using the four ribonucleoside triphosphates as substrates. This chain is DNA-directed RNA polymerase subunit beta', found in Exiguobacterium sibiricum (strain DSM 17290 / CCUG 55495 / CIP 109462 / JCM 13490 / 255-15).